We begin with the raw amino-acid sequence, 322 residues long: Tetraacyldisaccharide 4'-kinase (322 aa).

ATP is bound at residue C40–T47.

This sequence belongs to the LpxK family.

It catalyses the reaction a lipid A disaccharide + ATP = a lipid IVA + ADP + H(+). It participates in glycolipid biosynthesis; lipid IV(A) biosynthesis; lipid IV(A) from (3R)-3-hydroxytetradecanoyl-[acyl-carrier-protein] and UDP-N-acetyl-alpha-D-glucosamine: step 6/6. In terms of biological role, transfers the gamma-phosphate of ATP to the 4'-position of a tetraacyldisaccharide 1-phosphate intermediate (termed DS-1-P) to form tetraacyldisaccharide 1,4'-bis-phosphate (lipid IVA). This chain is Tetraacyldisaccharide 4'-kinase, found in Koribacter versatilis (strain Ellin345).